A 779-amino-acid chain; its full sequence is Pre-mRNA-splicing factor cef-1 (779 aa).

HTH myb-type domains lie at 1–56 (MPVV…DPSI) and 57–106 (KKIE…DEAE). DNA-binding regions (H-T-H motif) lie at residues 29–52 (WARV…NEWL) and 80–102 (WRTI…QRLL). 4 disordered regions span residues 113 to 192 (LGLT…ESRR), 246 to 284 (EYQR…PSVQ), 424 to 448 (TPLR…LRTP), and 497 to 525 (WELE…DRRE). Positions 127 to 152 (SADDVRKLRPGEVDPDPETKPARPDT) are enriched in basic and acidic residues. Positions 157–204 (EDEKEMLSEARARLANTQGKKAKRKARERQQEESRRLAALQKRRELKT) form a coiled coil. 2 stretches are compositionally biased toward basic and acidic residues: residues 246–256 (EYQRAHFDPKK) and 263–281 (RKGE…DKDP). Residues 653–772 (DEEEEQISTM…EELDALTLNG (120 aa)) are a coiled coil.

The protein belongs to the CEF1 family. In terms of assembly, associated with the spliceosome.

The protein localises to the cytoplasm. It is found in the nucleus. Involved in pre-mRNA splicing and cell cycle control. The protein is Pre-mRNA-splicing factor cef-1 (cef-1) of Neurospora crassa (strain ATCC 24698 / 74-OR23-1A / CBS 708.71 / DSM 1257 / FGSC 987).